Consider the following 276-residue polypeptide: Formamidopyrimidine-DNA glycosylase (276 aa).

The active-site Schiff-base intermediate with DNA is P2. E3 serves as the catalytic Proton donor. The Proton donor; for beta-elimination activity role is filled by K58. DNA is bound by residues H94, R112, and R157. An FPG-type zinc finger spans residues 242–276 (FVYDRAGQPCRVCGTPIKQIVQGQRSTYYCPTCQR). The Proton donor; for delta-elimination activity role is filled by R266.

It belongs to the FPG family. In terms of assembly, monomer. The cofactor is Zn(2+).

The enzyme catalyses Hydrolysis of DNA containing ring-opened 7-methylguanine residues, releasing 2,6-diamino-4-hydroxy-5-(N-methyl)formamidopyrimidine.. The catalysed reaction is 2'-deoxyribonucleotide-(2'-deoxyribose 5'-phosphate)-2'-deoxyribonucleotide-DNA = a 3'-end 2'-deoxyribonucleotide-(2,3-dehydro-2,3-deoxyribose 5'-phosphate)-DNA + a 5'-end 5'-phospho-2'-deoxyribonucleoside-DNA + H(+). In terms of biological role, involved in base excision repair of DNA damaged by oxidation or by mutagenic agents. Acts as a DNA glycosylase that recognizes and removes damaged bases. Has a preference for oxidized purines, such as 7,8-dihydro-8-oxoguanine (8-oxoG). Has AP (apurinic/apyrimidinic) lyase activity and introduces nicks in the DNA strand. Cleaves the DNA backbone by beta-delta elimination to generate a single-strand break at the site of the removed base with both 3'- and 5'-phosphates. The polypeptide is Formamidopyrimidine-DNA glycosylase (Paraburkholderia phymatum (strain DSM 17167 / CIP 108236 / LMG 21445 / STM815) (Burkholderia phymatum)).